Here is a 921-residue protein sequence, read N- to C-terminus: GPI ethanolamine phosphate transferase 1 (921 aa).

A helical membrane pass occupies residues 37–57 (PGHVALIAGLYEDVSAVTTGW). 2 N-linked (GlcNAc...) asparagine glycosylation sites follow: asparagine 69 and asparagine 132. Transmembrane regions (helical) follow at residues 386–406 (ALITIGYLGWVAYALTTVIDL), 418–438 (TLIGTIISTSALTALYASFAI), 441–461 (SPLTYYAYAFFPVFFWEEVYA), 483–503 (FVSLVFNCAVYVGIIESLALG), 509–529 (ILTILFVIGAFWPIAYGFSFL), 533–553 (MALSITWFLSCIAMSTFTLLP), 561–581 (VNMIMLGGALMVLVGIIYLIL), 606–626 (LVGIQIGLTLLAALVTRSSAL), 640–660 (VMGWVVLVVSLLMPLAYRAKP), and 679–699 (FVILTISYEGLFYIAFSAVLV). The tract at residues 715–737 (SANGAARSAPSPAKPHNLETSQT) is disordered. 4 helical membrane passes run 752–772 (VALFFFVLFQAAFFSTGNVAS), 795–815 (AMLILKLLIPFALISANLGIL), 825–845 (ALFMVVMAISDILTLYFFWVV), and 862–882 (VIASLLCVFVAALEGVSAMFI).

It belongs to the PIGG/PIGN/PIGO family. PIGN subfamily.

The protein localises to the endoplasmic reticulum membrane. The protein operates within glycolipid biosynthesis; glycosylphosphatidylinositol-anchor biosynthesis. Its function is as follows. Ethanolamine phosphate transferase involved in glycosylphosphatidylinositol-anchor biosynthesis. Transfers ethanolamine phosphate to the first alpha-1,4-linked mannose of the glycosylphosphatidylinositol precursor of GPI-anchor. This chain is GPI ethanolamine phosphate transferase 1 (MCD4), found in Chaetomium globosum (strain ATCC 6205 / CBS 148.51 / DSM 1962 / NBRC 6347 / NRRL 1970) (Soil fungus).